Reading from the N-terminus, the 129-residue chain is Small ribosomal subunit protein uS11 (129 aa).

This sequence belongs to the universal ribosomal protein uS11 family. As to quaternary structure, part of the 30S ribosomal subunit. Interacts with proteins S7 and S18. Binds to IF-3.

Its function is as follows. Located on the platform of the 30S subunit, it bridges several disparate RNA helices of the 16S rRNA. Forms part of the Shine-Dalgarno cleft in the 70S ribosome. The chain is Small ribosomal subunit protein uS11 from Psychrobacter arcticus (strain DSM 17307 / VKM B-2377 / 273-4).